Consider the following 577-residue polypeptide: Insulin-like growth factor 2 mRNA-binding protein 1 (577 aa).

2 RRM domains span residues 2 to 75 (NKLY…HSVP) and 81 to 156 (RKIQ…YIPD). Residues Ser12 and Ser73 each carry the phosphoserine modification. The segment at 156–190 (DEQITQGPENGRRGGFGSRGQPRQGSPVAAGAPAK) is disordered. Ser181 bears the Phosphoserine; by MTOR mark. KH domains lie at 195–260 (DIPL…CKMI), 276–343 (EVPL…EQEI), 405–470 (QEMV…QGRI), and 487–553 (KLET…QRKI). Positions 312–323 (ISSLQDLTLYNP) are sufficient for nuclear export. The interval 485 to 495 (EVKLETHIRVP) is sufficient for nuclear export. Thr528 is modified (phosphothreonine).

It belongs to the RRM IMP/VICKZ family. In terms of assembly, can form homodimers and heterodimers with IGF2BP1 and IGF2BP3. Component of the coding region determinant (CRD)-mediated complex, composed of DHX9, HNRNPU, IGF2BP1, SYNCRIP and YBX1. Identified in a mRNP complex, at least composed of DHX9, DDX3X, ELAVL1, HNRNPU, IGF2BP1, ILF3, PABPC1, PCBP2, PTBP2, STAU1, STAU2, SYNCRIP and YBX1. Associates with mRNP complex. Interacts with FMR1. Component of a multisubunit autoregulatory RNP complex (ARC), at least composed of IGF2BP1, PABPC1 and CSDE1. Interacts with AGO1 and AGO2. Interacts, through domains KH3 and KH4, with PABPC1 in an RNA-independent manner. Component of a TAU mRNP complex, at least composed of IGF2BP1, ELAVL4 and G3BP. Interacts with ELAVL4 in an RNA-dependent manner. Associates with microtubules and polysomes. Interacts with ELAVL1 and MATR3. In terms of processing, phosphorylated at Ser-181 by mTORC2 cotranslationally, promoting binding to the 3'-UTR of IGF2 mRNA. In terms of tissue distribution, expressed in zygotes and blastocysts (at protein level). Expressed in brain, skeletal muscle, trophoblasts of placenta, oocytes and spermatogonia (at protein level). Expressed in testis and ovary. Following colon injury, expressed in the wound bed mesenchyme during the first phase of repair, probably by colonic mesenchymal stem cells (at protein level).

It is found in the nucleus. Its subcellular location is the cytoplasm. It localises to the perinuclear region. The protein localises to the P-body. The protein resides in the stress granule. It is found in the cell projection. Its subcellular location is the lamellipodium. It localises to the dendrite. The protein localises to the dendritic spine. The protein resides in the growth cone. It is found in the filopodium. Its subcellular location is the axon. RNA-binding factor that recruits target transcripts to cytoplasmic protein-RNA complexes (mRNPs). This transcript 'caging' into mRNPs allows mRNA transport and transient storage. It also modulates the rate and location at which target transcripts encounter the translational apparatus and shields them from endonuclease attacks or microRNA-mediated degradation. Preferentially binds to N6-methyladenosine (m6A)-containing mRNAs and increases their stability. Regulates localized beta-actin/ACTB mRNA translation, a crucial process for cell polarity, cell migration and neurite outgrowth. Co-transcriptionally associates with the ACTB mRNA in the nucleus. This binding involves a conserved 54-nucleotide element in the ACTB mRNA 3'-UTR, known as the 'zipcode'. The RNP thus formed is exported to the cytoplasm, binds to a motor protein and is transported along the cytoskeleton to the cell periphery. During transport, prevents ACTB mRNA from being translated into protein. When the RNP complex reaches its destination near the plasma membrane, IGF2BP1 is phosphorylated. This releases the mRNA, allowing ribosomal 40S and 60S subunits to assemble and initiate ACTB protein synthesis. Monomeric ACTB then assembles into the subcortical actin cytoskeleton. During neuronal development, key regulator of neurite outgrowth, growth cone guidance and neuronal cell migration, presumably through the spatiotemporal fine tuning of protein synthesis, such as that of ACTB. May regulate mRNA transport to activated synapses. Binds to the 3'-UTR of CD44 mRNA and stabilizes it, hence promotes cell adhesion and invadopodia formation in cancer cells. Binds to the oncofetal H19 transcript and regulates its localization. Binds to and stabilizes BTRC/FBW1A mRNA. Binds to the adenine-rich autoregulatory sequence (ARS) located in PABPC1 mRNA and represses its translation. PABPC1 mRNA-binding is stimulated by PABPC1 protein. Prevents BTRC/FBW1A mRNA degradation by disrupting microRNA-dependent interaction with AGO2. During cellular stress, such as oxidative stress or heat shock, stabilizes target mRNAs that are recruited to stress granules, including CD44, IGF2, MAPK4, MYC, PTEN, RAPGEF2 and RPS6KA5 transcripts. Interacts with GAP43 transcript and transports it to axons. Binds to the 3'-UTR of IGF2 mRNA by a mechanism of cooperative and sequential dimerization and regulates IGF2 mRNA subcellular localization and translation. Binds to MYC mRNA, in the coding region instability determinant (CRD) of the open reading frame (ORF), hence prevents MYC cleavage by endonucleases and possibly microRNA targeting to MYC-CRD. Binding to MYC mRNA is enhanced by m6A-modification of the CRD. Binds to and stabilizes ABCB1/MDR-1 mRNA. Binds to the neuron-specific TAU mRNA and regulates its localization. Plays a direct role in the transport and translation of transcripts required for axonal regeneration in adult sensory neurons. During interstinal wound repair, interacts with and stabilizes PTGS2 transcript. PTGS2 mRNA stabilization may be crucial for colonic mucosal wound healing. This Mus musculus (Mouse) protein is Insulin-like growth factor 2 mRNA-binding protein 1 (Igf2bp1).